A 287-amino-acid chain; its full sequence is Co-chaperone protein DjlA (287 aa).

Residues 1–6 lie on the Periplasmic side of the membrane; sequence MQIFGK. The chain crosses the membrane as a helical span at residues 7-30; that stretch reads ILGAFFGFLFGGVFGALFGLFIGH. The Cytoplasmic segment spans residues 31 to 287; that stretch reads QFDKARRLSQ…DLIKKEKGFK (257 aa). Positions 192–213 are disordered; it reads GGFGGQQHQSHHSSSHGGWQQA. The region spanning 221–287 is the J domain; that stretch reads DAYKILGIDA…DLIKKEKGFK (67 aa).

As to quaternary structure, homodimer.

Its subcellular location is the cell inner membrane. Functionally, regulatory DnaK co-chaperone. Direct interaction between DnaK and DjlA is needed for the induction of the wcaABCDE operon, involved in the synthesis of a colanic acid polysaccharide capsule, possibly through activation of the RcsB/RcsC phosphotransfer signaling pathway. The colanic acid capsule may help the bacterium survive conditions outside the host. This is Co-chaperone protein DjlA from Vibrio vulnificus (strain CMCP6).